The chain runs to 109 residues: Large ribosomal subunit protein P1A (109 aa).

Over residues 69–84 the composition is skewed to low complexity; that stretch reads APVAGGAAAPAAADGE. A disordered region spans residues 69 to 109; that stretch reads APVAGGAAAPAAADGEAPAEEKEEAKEEEESDEDMGFGLFD. Residues 94 to 103 are compositionally biased toward acidic residues; that stretch reads KEEEESDEDM.

This sequence belongs to the eukaryotic ribosomal protein P1/P2 family. As to quaternary structure, component of the large ribosomal subunit (LSU). Mature yeast ribosomes consist of a small (40S) and a large (60S) subunit. The 40S small subunit contains 1 molecule of ribosomal RNA (18S rRNA) and at least 33 different proteins. The large 60S subunit contains 3 rRNA molecules (25S, 5.8S and 5S rRNA) and at least 46 different proteins. The acidic ribosomal P-proteins form the stalk structure of the 60S subunit. They are organized as a pentameric complex in which uL10/P0 interacts with 2 heterodimers of P1 and P2 proteins.

Its subcellular location is the cytoplasm. In terms of biological role, component of the ribosome, a large ribonucleoprotein complex responsible for the synthesis of proteins in the cell. The small ribosomal subunit (SSU) binds messenger RNAs (mRNAs) and translates the encoded message by selecting cognate aminoacyl-transfer RNA (tRNA) molecules. The large subunit (LSU) contains the ribosomal catalytic site termed the peptidyl transferase center (PTC), which catalyzes the formation of peptide bonds, thereby polymerizing the amino acids delivered by tRNAs into a polypeptide chain. The nascent polypeptides leave the ribosome through a tunnel in the LSU and interact with protein factors that function in enzymatic processing, targeting, and the membrane insertion of nascent chains at the exit of the ribosomal tunnel. This is Large ribosomal subunit protein P1A (rpp101) from Schizosaccharomyces pombe (strain 972 / ATCC 24843) (Fission yeast).